The following is a 562-amino-acid chain: 2-hydroxyisobutanoyl-CoA mutase large subunit (562 aa).

(3S)-3-hydroxybutanoyl-CoA is bound by residues 76-79 (YPTM), 86-88 (TMR), aspartate 117, 196-198 (TVQ), arginine 235, asparagine 240, histidine 245, and arginine 284.

It belongs to the acyl-CoA mutase large subunit family. In terms of assembly, homotetramer composed of two large substrate-binding subunits (HcmA) and two small cobalamin-binding subunits (HcmB).

It catalyses the reaction 2-hydroxyisobutanoyl-CoA = (3S)-3-hydroxybutanoyl-CoA. Functionally, together with HcmB, catalyzes the isomerization of 2-hydroxyisobutyryl-CoA and 3-hydroxybutyryl-CoA. Is specific for 2-hydroxyisobutyryl-CoA and (S)-3-hydroxybutyryl-CoA, and shows only very low activity with (R)-3-hydroxybutyryl-CoA, isobutyryl-CoA and butyryl-CoA. In vitro, can isomerize pivalyl-CoA and isovaleryl-CoA, with much lower efficiency. Plays a central role in the degradation of substrates bearing a tert-butyl moiety, such as the fuel oxygenate methyl tert-butyl ether (MTBE) and its metabolites. The polypeptide is 2-hydroxyisobutanoyl-CoA mutase large subunit (Aquincola tertiaricarbonis).